A 399-amino-acid chain; its full sequence is Methylmalonic aciduria type A homolog, mitochondrial (399 aa).

The N-terminal 15 residues, 1 to 15 (MVVRSLLRVSRLTSA), are a transit peptide targeting the mitochondrion. GTP-binding positions include 131-139 (GSPGVGKSS), D274, and 310-312 (SIM).

It belongs to the SIMIBI class G3E GTPase family. ArgK/MeaB subfamily.

The protein localises to the mitochondrion. May have GTPase activity. May also bind and hydrolyze ATP. May function as chaperone. Likely to have a role in propionyl-CoA and adenosylcobalamin metabolism. This is Methylmalonic aciduria type A homolog, mitochondrial (mmaa-1) from Caenorhabditis elegans.